Here is a 259-residue protein sequence, read N- to C-terminus: uncharacterized protein (259 aa).

Positions 1–22 (MKHSKKLLLCISFLLITVFISG) are cleaved as a signal peptide. C23 is lipidated: N-palmitoyl cysteine. A lipid anchor (S-diacylglycerol cysteine) is attached at C23.

Belongs to the staphylococcal tandem lipoprotein family.

The protein localises to the cell membrane. This is an uncharacterized protein from Staphylococcus epidermidis (strain ATCC 35984 / DSM 28319 / BCRC 17069 / CCUG 31568 / BM 3577 / RP62A).